We begin with the raw amino-acid sequence, 294 residues long: 4-hydroxy-tetrahydrodipicolinate synthase (294 aa).

Residue Thr-44 participates in pyruvate binding. Residue Tyr-132 is the Proton donor/acceptor of the active site. Lys-160 functions as the Schiff-base intermediate with substrate in the catalytic mechanism. Val-202 provides a ligand contact to pyruvate.

This sequence belongs to the DapA family. As to quaternary structure, homotetramer; dimer of dimers.

The protein localises to the cytoplasm. It carries out the reaction L-aspartate 4-semialdehyde + pyruvate = (2S,4S)-4-hydroxy-2,3,4,5-tetrahydrodipicolinate + H2O + H(+). Its pathway is amino-acid biosynthesis; L-lysine biosynthesis via DAP pathway; (S)-tetrahydrodipicolinate from L-aspartate: step 3/4. Functionally, catalyzes the condensation of (S)-aspartate-beta-semialdehyde [(S)-ASA] and pyruvate to 4-hydroxy-tetrahydrodipicolinate (HTPA). The sequence is that of 4-hydroxy-tetrahydrodipicolinate synthase from Leptospira borgpetersenii serovar Hardjo-bovis (strain L550).